The sequence spans 42 residues: uncharacterized protein (42 aa).

The segment at 20–42 (RSGRAERGVRAHSPAWSERPTPN) is disordered.

This is an uncharacterized protein from Escherichia coli.